A 213-amino-acid chain; its full sequence is Peroxynitrite isomerase 2 (213 aa).

Residues 58 to 64 carry the GXWXGXG motif; the sequence is GVWRGEG. Heme b is bound by residues Lys-176 and His-203.

The protein belongs to the nitrobindin family. As to quaternary structure, homodimer. It depends on heme b as a cofactor.

The catalysed reaction is peroxynitrite = nitrate. It functions in the pathway nitrogen metabolism. In terms of biological role, heme-binding protein able to scavenge peroxynitrite and to protect free L-tyrosine against peroxynitrite-mediated nitration, by acting as a peroxynitrite isomerase that converts peroxynitrite to nitrate. Therefore, this protein likely plays a role in peroxynitrite sensing and in the detoxification of reactive nitrogen and oxygen species (RNS and ROS, respectively). Is able to bind nitric oxide (NO) in vitro, but may act as a sensor of peroxynitrite levels in vivo. This is Peroxynitrite isomerase 2 from Rhodococcus jostii (strain RHA1).